The chain runs to 94 residues: MPRRSIWKGSFVDAFLLRMKKKRDLLFNRKIWSRRSSILPEFVDCFVRIYNGKTFVRCKITEGKVGHKFGEFAFTRKRRPSRTNIGPGRKRGKK.

The protein belongs to the universal ribosomal protein uS19 family.

The protein resides in the mitochondrion. This Petunia hybrida (Petunia) protein is Small ribosomal subunit protein uS19m (RPS19).